The sequence spans 53 residues: MLSWALAFLVIALIAAVFGFGGIASASAGIAQILFFIFLVMFVVALILRAVRG.

2 consecutive transmembrane segments (helical) span residues 4–24 (WALA…GGIA) and 29–48 (GIAQ…ALIL).

This sequence belongs to the UPF0391 family.

The protein localises to the cell membrane. This chain is UPF0391 membrane protein TM1040_2720, found in Ruegeria sp. (strain TM1040) (Silicibacter sp.).